Here is a 709-residue protein sequence, read N- to C-terminus: Phosphoribosylformylglycinamidine synthase subunit PurL (709 aa).

The active site involves His36. Residues Tyr39 and Lys80 each contribute to the ATP site. Glu82 serves as a coordination point for Mg(2+). Residues 83-86 and Arg105 each bind substrate; that span reads SHNH. The active-site Proton acceptor is His84. A Mg(2+)-binding site is contributed by Asp106. Residue Gln226 coordinates substrate. Asp252 is a binding site for Mg(2+). A substrate-binding site is contributed by 294-296; it reads ETQ. ATP-binding residues include Asp470 and Gly507. Residue Ser510 participates in substrate binding.

Belongs to the FGAMS family. Monomer. Part of the FGAM synthase complex composed of 1 PurL, 1 PurQ and 2 PurS subunits.

The protein localises to the cytoplasm. It catalyses the reaction N(2)-formyl-N(1)-(5-phospho-beta-D-ribosyl)glycinamide + L-glutamine + ATP + H2O = 2-formamido-N(1)-(5-O-phospho-beta-D-ribosyl)acetamidine + L-glutamate + ADP + phosphate + H(+). It functions in the pathway purine metabolism; IMP biosynthesis via de novo pathway; 5-amino-1-(5-phospho-D-ribosyl)imidazole from N(2)-formyl-N(1)-(5-phospho-D-ribosyl)glycinamide: step 1/2. Part of the phosphoribosylformylglycinamidine synthase complex involved in the purines biosynthetic pathway. Catalyzes the ATP-dependent conversion of formylglycinamide ribonucleotide (FGAR) and glutamine to yield formylglycinamidine ribonucleotide (FGAM) and glutamate. The FGAM synthase complex is composed of three subunits. PurQ produces an ammonia molecule by converting glutamine to glutamate. PurL transfers the ammonia molecule to FGAR to form FGAM in an ATP-dependent manner. PurS interacts with PurQ and PurL and is thought to assist in the transfer of the ammonia molecule from PurQ to PurL. The protein is Phosphoribosylformylglycinamidine synthase subunit PurL of Saccharolobus solfataricus (strain ATCC 35092 / DSM 1617 / JCM 11322 / P2) (Sulfolobus solfataricus).